Consider the following 1048-residue polypeptide: MNQNEHPFAFPETKLPLTSNQNWQLSTQRQRTEKKSITNFTYQEFDYENISRDTLERCLTTIIKHHPIFGAKLSDDFYLHFPSKTHIETFAVNDLSNALKQDIDKQLADTRSAVTKSRSQAIISIMFSILPKNIIRLHVRFNSVVVDNPSVTLFFEQLTQLLSGSPLSFLNQEQTISAYNHKVNNELLSVDLESARWNEYILTLPSSANLPTICEPEKLDETDITRRCITLSQRKWQQLVTVSKKHNVTPEITLASIFSTVLSLWGHQKYLMMRFDITKINDYTGIIGQFTEPLLVGMSGFEQSFLSLVKNNQKKFEEAYHYDVKVPVFQCVNKLSNISDSHRYPANITFSSELLNTNHSKKAVWGCRQSANTWLSLHAVIEQEQLVLQWDSQDAIFPKDMIKDMLHSYTDLLDLLSQKDVNWAQPLPTLLPKHQESIRNKINQQGDLELTKELLHQRFFKNVESTPNALAIIHGQESLDYITLASYAKSCAGALTEAGVKSGDRVAVTMNKGIGQIVAVLGILYAGAIYVPVSLDQPQERRESIYQGAGINVILINESDSKNSPSNDLFFFLDWQTAIKSEPMRSPQDVAPSQPAYIIYTSGSTGTPKGVVISHQGALNTCIAINRRYQIGKNDRVLALSALHFDLSVYDIFGLLSAGGTIVLVSELERRDPIAWCQAIEEHNVTMWNSVPALFDMLLTYATCFNSIAPSKLRLTMLSGDWIGLDLPQRYRNYRVDGQFIAMGGATEASIWSNVFDVEKVPMEWRSIPYGYPLPRQQYRVVDDLGRDCPDWVAGELWIGGDGIALGYFDDELKTQAQFLHIDGHAWYRTGDMGCYWPDGTLEFLGRRDKQVKVGGYRIELGEIEVALNNIPGVQRAVAIAVGNKDKTLAAFIVMDSEQAPIVTAPLDAEEVQLLLNKQLPNYMVPKRIIFLETFPLTANGKVDHKALTRMTNREKKTSQSINKPIITASEDRVAKIWNDVLGPTELYKSSDFFLSGGDAYNAIEVVKRCHKAGYLIKLSMLYRYSTIEAFAIIMDRCRLAPQEEAEL.

The 75-residue stretch at 965-1039 folds into the Carrier domain; it reads PIITASEDRV…AFAIIMDRCR (75 aa).

It belongs to the ATP-dependent AMP-binding enzyme family.

The protein operates within siderophore biosynthesis; anguibactin biosynthesis. Its function is as follows. Bifunctional protein that plays an essential role in virulence. Plays a role in both production of the siderophore anguibactin and regulation of iron transport genes. This Vibrio anguillarum (strain ATCC 68554 / 775) (Listonella anguillarum) protein is Anguibactin system regulator (angR).